Here is an 825-residue protein sequence, read N- to C-terminus: Taste receptor cell protein 1 (825 aa).

The first 21 residues, M1 to A21, serve as a signal peptide directing secretion. 2 disordered regions span residues E66–G97 and T299–P322. The span at S302 to P322 shows a compositional bias: low complexity.

Expression is restricted to circumvallate papillae.

This chain is Taste receptor cell protein 1 (Trcg1), found in Mus musculus (Mouse).